The primary structure comprises 868 residues: mRNA-capping enzyme (868 aa).

Lys-282 functions as the N6-GMP-lysine intermediate in the catalytic mechanism. Positions 594–868 (GIYRAQTALI…LFGFICLRKN (275 aa)) constitute an mRNA cap 0 methyltransferase domain. Residues Lys-607, Gly-624, Asp-646, and 710 to 712 (LFI) each bind S-adenosyl-L-methionine.

In the N-terminal section; belongs to the dsDNA virus mRNA guanylyltransferase family. The protein in the C-terminal section; belongs to the class I-like SAM-binding methyltransferase superfamily. mRNA cap 0 methyltransferase family. In terms of assembly, part of the viral DNA-directed RNA polymerase that consists of 8 polII-like subunits (RPB1, RPB2, RPB3, RPB5, RPB6, RPB7, RPB9, RPB10), a capping enzyme and a termination factor.

The protein localises to the virion. It carries out the reaction a 5'-end triphospho-ribonucleoside in mRNA + H2O = a 5'-end diphospho-ribonucleoside in mRNA + phosphate + H(+). The enzyme catalyses a 5'-end diphospho-ribonucleoside in mRNA + GTP + H(+) = a 5'-end (5'-triphosphoguanosine)-ribonucleoside in mRNA + diphosphate. It catalyses the reaction a 5'-end (5'-triphosphoguanosine)-ribonucleoside in mRNA + S-adenosyl-L-methionine = a 5'-end (N(7)-methyl 5'-triphosphoguanosine)-ribonucleoside in mRNA + S-adenosyl-L-homocysteine. The protein operates within mRNA processing; mRNA capping. In terms of biological role, probably catalyzes the second reaction in the mRNA cap formation pathway. Forms a covalent complex with GTP. The polypeptide is mRNA-capping enzyme (African swine fever virus (isolate Tick/South Africa/Pretoriuskop Pr4/1996) (ASFV)).